Consider the following 314-residue polypeptide: Taste receptor type 2 member 42 (314 aa).

Residues 1-7 (MATEMDK) lie on the Extracellular side of the membrane. The helical transmembrane segment at 8–28 (IFLTLATVEFIIGMLGNVFIG) threads the bilayer. Over 29–50 (LVNCSEGIKNQKVFSVDFILTC) the chain is Cytoplasmic. A helical membrane pass occupies residues 51-71 (LAISTIGHLLVILFDSCVVGL). Over 72–101 (APHLYATDRVRRPVTMLWHMXNHLTTWLAT) the chain is Extracellular. A helical transmembrane segment spans residues 102-122 (CLSIFYFFKIAHFPHSLFLWL). Residues 123-127 (RWRMN) are Cytoplasmic-facing. Residues 128–148 (RVIAILLTLSLFLLIFDCLVL) traverse the membrane as a helical segment. Over 149-187 (EMFIDXSLNIIDKSNLTLYLDESKTPYDKLSLLKILLSL) the chain is Extracellular. A glycan (N-linked (GlcNAc...) asparagine) is linked at asparagine 163. The chain crosses the membrane as a helical span at residues 188–208 (NSFIPFSLCLTSLLFLFLSLV). At 209–238 (RHTRNLKLSSLGSRDSSTEAHRRAMKMVMS) the chain is on the cytoplasmic side. Residues 239-259 (LLFLFIVHFFSLQVANWTFCI) traverse the membrane as a helical segment. The Extracellular segment spans residues 260-265 (LGNNKY). Residues 266 to 286 (TQFVTLALHAFPSCHSFILIL) traverse the membrane as a helical segment. Over 287 to 314 (GNSKLRQTAVRLLWHLRNYTKRPNPLPL) the chain is Cytoplasmic.

The protein belongs to the G-protein coupled receptor T2R family.

The protein localises to the membrane. Its function is as follows. Receptor that may play a role in the perception of bitterness and is gustducin-linked. May play a role in sensing the chemical composition of the gastrointestinal content. The activity of this receptor may stimulate alpha gustducin, mediate PLC-beta-2 activation and lead to the gating of TRPM5. The protein is Taste receptor type 2 member 42 (TAS2R42) of Macaca mulatta (Rhesus macaque).